The chain runs to 465 residues: Biotin biosynthesis bifunctional protein BioCD (465 aa).

The interval 1 to 254 (MTPFLPDRSI…AYGQWRKPRG (254 aa)) is malonyl-ACP O-methyltransferase. ATP-binding positions include D234 and 263–268 (GVGKTL). A DTB synthetase region spans residues 255–465 (VFVTGTDTGV…DSLLSSNASR (211 aa)). T267 contributes to the Mg(2+) binding site. K283 is a catalytic residue. Position 287 (T287) interacts with substrate. ATP-binding positions include D295, 351 to 354 (EGAG), and 435 to 437 (PQL). Mg(2+) contacts are provided by D295 and E351.

This sequence in the N-terminal section; belongs to the methyltransferase superfamily. The protein in the C-terminal section; belongs to the dethiobiotin synthetase family. The cofactor is Mg(2+).

It is found in the cytoplasm. The enzyme catalyses (7R,8S)-7,8-diammoniononanoate + CO2 + ATP = (4R,5S)-dethiobiotin + ADP + phosphate + 3 H(+). It catalyses the reaction malonyl-[ACP] + S-adenosyl-L-methionine = malonyl-[ACP] methyl ester + S-adenosyl-L-homocysteine. It participates in cofactor biosynthesis; biotin biosynthesis; biotin from 7,8-diaminononanoate: step 1/2. It functions in the pathway cofactor biosynthesis; biotin biosynthesis. In terms of biological role, converts the free carboxyl group of a malonyl-thioester to its methyl ester by transfer of a methyl group from S-adenosyl-L-methionine (SAM). It allows synthesis of pimeloyl-ACP via the fatty acid synthetic pathway. Functionally, catalyzes a mechanistically unusual reaction, the ATP-dependent insertion of CO2 between the N7 and N8 nitrogen atoms of 7,8-diaminopelargonic acid (DAPA, also called 7,8-diammoniononanoate) to form a ureido ring. This Bordetella avium (strain 197N) protein is Biotin biosynthesis bifunctional protein BioCD.